The following is a 116-amino-acid chain: Nucleoid-associated protein Tfu_0045 (116 aa).

The protein belongs to the YbaB/EbfC family. Homodimer.

It localises to the cytoplasm. Its subcellular location is the nucleoid. Binds to DNA and alters its conformation. May be involved in regulation of gene expression, nucleoid organization and DNA protection. The sequence is that of Nucleoid-associated protein Tfu_0045 from Thermobifida fusca (strain YX).